Reading from the N-terminus, the 154-residue chain is Nucleoside diphosphate kinase A2 (154 aa).

6 residues coordinate ATP: lysine 13, phenylalanine 61, arginine 89, threonine 95, arginine 106, and asparagine 116. Histidine 119 acts as the Pros-phosphohistidine intermediate in catalysis.

The protein belongs to the NDK family. The cofactor is Mg(2+).

It localises to the cytoplasm. It catalyses the reaction a 2'-deoxyribonucleoside 5'-diphosphate + ATP = a 2'-deoxyribonucleoside 5'-triphosphate + ADP. It carries out the reaction a ribonucleoside 5'-diphosphate + ATP = a ribonucleoside 5'-triphosphate + ADP. In terms of biological role, major role in the synthesis of nucleoside triphosphates other than ATP. The ATP gamma phosphate is transferred to the NDP beta phosphate via a ping-pong mechanism, using a phosphorylated active-site intermediate. In Xenopus laevis (African clawed frog), this protein is Nucleoside diphosphate kinase A2.